The chain runs to 493 residues: Probable cytosol aminopeptidase (493 aa).

2 residues coordinate Mn(2+): lysine 257 and aspartate 262. The active site involves lysine 269. Mn(2+) is bound by residues aspartate 280, aspartate 339, and glutamate 341. The active site involves arginine 343.

This sequence belongs to the peptidase M17 family. Requires Mn(2+) as cofactor.

It localises to the cytoplasm. The enzyme catalyses Release of an N-terminal amino acid, Xaa-|-Yaa-, in which Xaa is preferably Leu, but may be other amino acids including Pro although not Arg or Lys, and Yaa may be Pro. Amino acid amides and methyl esters are also readily hydrolyzed, but rates on arylamides are exceedingly low.. It carries out the reaction Release of an N-terminal amino acid, preferentially leucine, but not glutamic or aspartic acids.. Functionally, presumably involved in the processing and regular turnover of intracellular proteins. Catalyzes the removal of unsubstituted N-terminal amino acids from various peptides. In Aquifex aeolicus (strain VF5), this protein is Probable cytosol aminopeptidase (pepA).